Consider the following 67-residue polypeptide: Large ribosomal subunit protein bL35 (67 aa).

It belongs to the bacterial ribosomal protein bL35 family.

This Rhizorhabdus wittichii (strain DSM 6014 / CCUG 31198 / JCM 15750 / NBRC 105917 / EY 4224 / RW1) (Sphingomonas wittichii) protein is Large ribosomal subunit protein bL35.